The following is a 321-amino-acid chain: PI-PLC X domain-containing protein 3 (321 aa).

Residues 22 to 197 (SIHSIPLTNL…DYQVLVFYHS (176 aa)) form the PI-PLC X-box domain. Active-site residues include His-37 and His-114.

The sequence is that of PI-PLC X domain-containing protein 3 (PLCXD3) from Bos taurus (Bovine).